Here is a 198-residue protein sequence, read N- to C-terminus: SCO2-like protein RF_0043 (198 aa).

The protein belongs to the SCO1/2 family.

The protein is SCO2-like protein RF_0043 of Rickettsia felis (strain ATCC VR-1525 / URRWXCal2) (Rickettsia azadi).